We begin with the raw amino-acid sequence, 263 residues long: MSQSGSVLRRNGFTFKQFFVAHDRCAMKVGTDGILLGAWAPVADVKRILDIGTGSGLLALMLAQRTDDNVPIDAVELDAGAAMQAQENVAHSPWPHRITVHTDDIQRWAPRQTVRFDLIISNPPYYEPGVECATPQREQARYTATLDHQTLLAIAADCITEDGFFCVVLPEQIGNAFTQQALNMGWHLRLRTDVAENEARLPHRVLLAFSPQAGECFSDRLVIRGSDQHYSESYTALTQAFYLFMWGVNGERIDGPDSASCCG.

Belongs to the methyltransferase superfamily. tRNA (adenine-N(6)-)-methyltransferase family.

The protein localises to the cytoplasm. The catalysed reaction is adenosine(37) in tRNA1(Val) + S-adenosyl-L-methionine = N(6)-methyladenosine(37) in tRNA1(Val) + S-adenosyl-L-homocysteine + H(+). Specifically methylates the adenine in position 37 of tRNA(1)(Val) (anticodon cmo5UAC). The polypeptide is tRNA1(Val) (adenine(37)-N6)-methyltransferase (Salmonella choleraesuis (strain SC-B67)).